The chain runs to 494 residues: Ammonium transporter Rh type C (494 aa).

Residues 1–22 (MGNFIQGCKDYFSQQKNTNIRL) are Cytoplasmic-facing. A helical transmembrane segment spans residues 23–43 (TLPVVCFVWQIAMIILFGVFI). Residues 44 to 74 (RYDEESDTHWVETKAHDNITSDIENDFYFRY) are Extracellular-facing. A glycan (N-linked (GlcNAc...) asparagine) is linked at Asn61. A helical transmembrane segment spans residues 75 to 95 (PSFQDVHVMIFVGFGFLMTFL). The Cytoplasmic segment spans residues 96–99 (KRYS). A helical membrane pass occupies residues 100-120 (FGAVGFNFLIASFGLQWALLM). The Extracellular portion of the chain corresponds to 121–133 (QGWFHSLDPQTGK). A helical membrane pass occupies residues 134–154 (IFIGVESLINADFCVAGCLIA). Topologically, residues 155 to 166 (YGAVLGKVSPVQ) are cytoplasmic. A helical transmembrane segment spans residues 167–187 (LLVMTLFGVTLFAVEEYIILN). Residues 188–194 (LLHARDA) lie on the Extracellular side of the membrane. A helical membrane pass occupies residues 195-215 (GGSMVIHTFGGYYGLTISWVL). Residues 216-234 (YRPNLHQSKRMQGSVYHSD) lie on the Cytoplasmic side of the membrane. The chain crosses the membrane as a helical span at residues 235 to 255 (IFAMIGTLFLWMFWPSFNSAI). Over 256-265 (TDHGDGQHRA) the chain is Extracellular. Residues 266–286 (VINTYLCLASTVLTTVAISSF) traverse the membrane as a helical segment. At 287–297 (SQKTGKLDMVH) the chain is on the cytoplasmic side. A helical membrane pass occupies residues 298-318 (IQNSTLAGGVALGTAAEFMIS). Residue Pro319 is a topological domain, extracellular. The helical transmembrane segment at 320–340 (YGALIVGFLCGIISTMGYIFI) threads the bilayer. Over 341-358 (SPFLEKTLKIQDTCGIHN) the chain is Cytoplasmic. The chain crosses the membrane as a helical span at residues 359–379 (LHAMPGVIGGIVGAITAAAAS). Over 380 to 411 (ESVYGKHALINTFDFTGDFKDRTVLTQGGYQA) the chain is Extracellular. Residues 412–432 (AGMCVSIVFGVAGGAIVGSIL) form a helical membrane-spanning segment. Residues 433 to 494 (KLPIWGDPAD…SNFSVEHCES (62 aa)) lie on the Cytoplasmic side of the membrane.

This sequence belongs to the ammonium transporter (TC 2.A.49) family. Rh subfamily. Homotrimer.

It localises to the apical cell membrane. Functions as an ammonia transporter. May play a role in the elimination of ammonia in the gill. The protein is Ammonium transporter Rh type C (rhcg) of Oncorhynchus mykiss (Rainbow trout).